The sequence spans 129 residues: Small ribosomal subunit protein uS11 (129 aa).

This sequence belongs to the universal ribosomal protein uS11 family. Part of the 30S ribosomal subunit. Interacts with proteins S7 and S18. Binds to IF-3.

Functionally, located on the platform of the 30S subunit, it bridges several disparate RNA helices of the 16S rRNA. Forms part of the Shine-Dalgarno cleft in the 70S ribosome. In Bradyrhizobium sp. (strain BTAi1 / ATCC BAA-1182), this protein is Small ribosomal subunit protein uS11.